A 457-amino-acid chain; its full sequence is MTTGKIIQVIGAVVDVEFPQNIVPKVYNALEVTNGKNKLILEVEQQLGSGIVRCIAMGVSEGLRRGLTVIDLGHAIKVPVGKSTLSRIMNVLGEPIDMKGIINAEEHWSIHRSAPRYEELALSQEILETGIKVIDLMCPLVKGGKAGLFGGAGVGKTVNMMELIRNIAIEHAGYSVFTGVGERTREGNDFYHEMKDSNVLDKVSLVYGQMNEPPGNRFRVALTGLTIAEKFRDEGHDVLLFIDNIYRYTLAGAEVSALLGRMPSAVGYQPTLSEEMGLLQERITSTKYGSITSIQAVYVPADDLTDPAPATTFSHLDATIVLSRQIASLGIYPAIDPLESTSRQLDPLVVGQKHYDVALGVQGILQRYQELKDIIAILGIDELSEDDKMVVSRARKIQRFLSQPFFVAEVFTGSQGKYVSLQETISGFEDIINGKYDHLPEQKFYMIGSINEAMTKE.

G150 to T157 contributes to the ATP binding site.

It belongs to the ATPase alpha/beta chains family. F-type ATPases have 2 components, CF(1) - the catalytic core - and CF(0) - the membrane proton channel. CF(1) has five subunits: alpha(3), beta(3), gamma(1), delta(1), epsilon(1). CF(0) has three main subunits: a(1), b(2) and c(9-12). The alpha and beta chains form an alternating ring which encloses part of the gamma chain. CF(1) is attached to CF(0) by a central stalk formed by the gamma and epsilon chains, while a peripheral stalk is formed by the delta and b chains.

It localises to the cell membrane. The catalysed reaction is ATP + H2O + 4 H(+)(in) = ADP + phosphate + 5 H(+)(out). In terms of biological role, produces ATP from ADP in the presence of a proton gradient across the membrane. The catalytic sites are hosted primarily by the beta subunits. The protein is ATP synthase subunit beta of Baumannia cicadellinicola subsp. Homalodisca coagulata.